Reading from the N-terminus, the 1079-residue chain is Intraflagellar transport protein 80 (1079 aa).

The tract at residues 495 to 514 (GDMIRPSTVQNQPSTQGLPN) is disordered. Residues 501 to 514 (STVQNQPSTQGLPN) show a composition bias toward polar residues.

The protein localises to the cell projection. It is found in the cilium. It localises to the flagellum. The protein resides in the cytoplasm. Its subcellular location is the cytoskeleton. The protein localises to the flagellum axoneme. It is found in the flagellum basal body. Component of the intraflagellar transport complex B (IFT-B) involved in flagellar assembly. The polypeptide is Intraflagellar transport protein 80 (Giardia intestinalis (strain ATCC 50803 / WB clone C6) (Giardia lamblia)).